The following is a 389-amino-acid chain: Brix domain-containing protein C1B9.03c (389 aa).

The region spanning 28–309 (SMVIRSGASE…LIKITEDAMG (282 aa)) is the Brix domain. Positions 323-350 (EEIKQQDNFHEQSRALKEKRKKEQDENV) are enriched in basic and acidic residues. Residues 323 to 389 (EEIKQQDNFH…EGSSAYSDTE (67 aa)) form a disordered region. Residues 351–362 (RRKRENKKRRKD) show a composition bias toward basic residues. At S377 the chain carries Phosphoserine. The segment covering 379 to 389 (NEGSSAYSDTE) has biased composition (polar residues).

The chain is Brix domain-containing protein C1B9.03c from Schizosaccharomyces pombe (strain 972 / ATCC 24843) (Fission yeast).